Here is a 253-residue protein sequence, read N- to C-terminus: Phosphoglycerate mutase 2 (253 aa).

Threonine 3 is modified (phosphothreonine). Substrate-binding positions include 10-17 (RHGESTWN), 23-24 (CG), arginine 62, 89-92 (ERHY), lysine 100, and 116-117 (RR). Histidine 11 acts as the Tele-phosphohistidine intermediate in catalysis. The residue at position 14 (serine 14) is a Phosphoserine. The Proton donor/acceptor role is filled by glutamate 89. Serine 118 bears the Phosphoserine mark. Tyrosine 132 and tyrosine 133 each carry phosphotyrosine. Phosphoserine is present on serine 135. Threonine 152 is modified (phosphothreonine). 187-188 (GN) is a binding site for substrate.

This sequence belongs to the phosphoglycerate mutase family. BPG-dependent PGAM subfamily. Homodimer. Interacts with ENO1. In terms of tissue distribution, expressed in the heart and muscle. Not found in the liver and brain.

The catalysed reaction is (2R)-2-phosphoglycerate = (2R)-3-phosphoglycerate. The enzyme catalyses (2R)-3-phospho-glyceroyl phosphate = (2R)-2,3-bisphosphoglycerate + H(+). Interconversion of 3- and 2-phosphoglycerate with 2,3-bisphosphoglycerate as the primer of the reaction. Can also catalyze the reaction of EC 5.4.2.4 (synthase), but with a reduced activity. The chain is Phosphoglycerate mutase 2 (PGAM2) from Homo sapiens (Human).